We begin with the raw amino-acid sequence, 1462 residues long: Gag-Pro-Pol polyprotein (1462 aa).

Glycine 2 is lipidated: N-myristoyl glycine; by host. The tract at residues 93–142 (QIPSRPAPPPPSSSTHDPPDSDPQIPPPYVEPTAPQVLPVMHPHGAPPNH) is disordered. A Phosphoserine; by host MAPK1 modification is found at serine 105. The PPXY motif signature appears at 118–121 (PPPY). A PTAP/PSAP motif motif is present at residues 124–127 (PTAP). CCHC-type zinc fingers lie at residues 355-372 (QPCF…DCTQ) and 378-395 (GPCP…DCPR). In terms of domain architecture, Peptidase A2 spans 476–554 (IEALLDTGAD…NNWAIIGRDA (79 aa)). The active-site Protease; shared with dimeric partner is the aspartate 481. Positions 614 to 804 (LEAGHIEPYT…GTIKFLGQII (191 aa)) constitute a Reverse transcriptase domain. Mg(2+) contacts are provided by aspartate 680, aspartate 755, aspartate 756, aspartate 1040, glutamate 1074, aspartate 1096, aspartate 1157, aspartate 1230, and aspartate 1287. The RNase H type-1 domain maps to 1031–1165 (INTAPCLFSD…TDALLITPVL (135 aa)). The Integrase catalytic domain maps to 1219–1388 (RGLLPNHIWQ…QPIPETHSLS (170 aa)). Residues 1393–1443 (HWYYFKLPGLNSRQWKGPQEALQEAAGAALIPVSASSAQWIPWRLLKRAAC) constitute a DNA-binding region (integrase-type).

In terms of assembly, homodimer; the homodimers are part of the immature particles. Interacts with human TSG101 and NEDD4; these interactions are essential for budding and release of viral particles. Homodimer; further assembles as homohexamers. The cofactor is Mg(2+). Phosphorylation of the matrix protein p19 by MAPK1 seems to play a role in budding. Post-translationally, myristoylated. Myristoylation of the matrix (MA) domain mediates the transport and binding of Gag polyproteins to the host plasma membrane and is required for the assembly of viral particles. In terms of processing, specific enzymatic cleavages by the viral protease yield mature proteins. The polyprotein is cleaved during and after budding, this process is termed maturation. The protease is autoproteolytically processed at its N- and C-termini.

Its subcellular location is the virion. The catalysed reaction is Endonucleolytic cleavage to 5'-phosphomonoester.. It carries out the reaction DNA(n) + a 2'-deoxyribonucleoside 5'-triphosphate = DNA(n+1) + diphosphate. Functionally, the matrix domain targets Gag, Gag-Pro and Gag-Pro-Pol polyproteins to the plasma membrane via a multipartite membrane binding signal, that includes its myristoylated N-terminus. Its function is as follows. Matrix protein. Forms the spherical core of the virus that encapsulates the genomic RNA-nucleocapsid complex. In terms of biological role, binds strongly to viral nucleic acids and promote their aggregation. Also destabilizes the nucleic acids duplexes via highly structured zinc-binding motifs. Functionally, the aspartyl protease mediates proteolytic cleavages of Gag and Gag-Pol polyproteins during or shortly after the release of the virion from the plasma membrane. Cleavages take place as an ordered, step-wise cascade to yield mature proteins. This process is called maturation. Displays maximal activity during the budding process just prior to particle release from the cell (Potential). Cleaves the translation initiation factor eIF4G leading to the inhibition of host cap-dependent translation. Its function is as follows. RT is a multifunctional enzyme that converts the viral RNA genome into dsDNA in the cytoplasm, shortly after virus entry into the cell. This enzyme displays a DNA polymerase activity that can copy either DNA or RNA templates, and a ribonuclease H (RNase H) activity that cleaves the RNA strand of RNA-DNA heteroduplexes in a partially processive 3' to 5'-endonucleasic mode. Conversion of viral genomic RNA into dsDNA requires many steps. A tRNA-Pro binds to the primer-binding site (PBS) situated at the 5'-end of the viral RNA. RT uses the 3' end of the tRNA primer to perform a short round of RNA-dependent minus-strand DNA synthesis. The reading proceeds through the U5 region and ends after the repeated (R) region which is present at both ends of viral RNA. The portion of the RNA-DNA heteroduplex is digested by the RNase H, resulting in a ssDNA product attached to the tRNA primer. This ssDNA/tRNA hybridizes with the identical R region situated at the 3' end of viral RNA. This template exchange, known as minus-strand DNA strong stop transfer, can be either intra- or intermolecular. RT uses the 3' end of this newly synthesized short ssDNA to perform the RNA-dependent minus-strand DNA synthesis of the whole template. RNase H digests the RNA template except for a polypurine tract (PPT) situated at the 5' end of the genome. It is not clear if both polymerase and RNase H activities are simultaneous. RNase H probably can proceed both in a polymerase-dependent (RNA cut into small fragments by the same RT performing DNA synthesis) and a polymerase-independent mode (cleavage of remaining RNA fragments by free RTs). Secondly, RT performs DNA-directed plus-strand DNA synthesis using the PPT that has not been removed by RNase H as primer. PPT and tRNA primers are then removed by RNase H. The 3' and 5' ssDNA PBS regions hybridize to form a circular dsDNA intermediate. Strand displacement synthesis by RT to the PBS and PPT ends produces a blunt ended, linear dsDNA copy of the viral genome that includes long terminal repeats (LTRs) at both ends. Catalyzes viral DNA integration into the host chromosome, by performing a series of DNA cutting and joining reactions. The chain is Gag-Pro-Pol polyprotein (gag-pro-pol) from Human T-cell leukemia virus 1 (isolate Caribbea HS-35 subtype A) (HTLV-1).